The chain runs to 713 residues: B3 domain-containing transcription factor VAL3 (713 aa).

The segment at residues 328–427 (FEKILSATDT…KLILGFRKAS (100 aa)) is a DNA-binding region (TF-B3). Disordered stretches follow at residues 459–478 (VECS…SKRQ) and 616–713 (LNSD…TSSM). Positions 464 to 477 (GKKKSSMMITRSKR) are enriched in basic residues. Positions 616–629 (LNSDNGLHQSANNS) are enriched in polar residues. Residues 663-674 (TKSETLPHDDTV) are compositionally biased toward basic and acidic residues. Low complexity predominate over residues 676–688 (SSFTSPSSSSAHS). Basic and acidic residues predominate over residues 690-700 (NNKEDEGKLKT). Over residues 701–713 (TTEIADTTTTSSM) the composition is skewed to low complexity.

Its subcellular location is the nucleus. May be involved in plant development. The protein is B3 domain-containing transcription factor VAL3 (VAL3) of Arabidopsis thaliana (Mouse-ear cress).